Consider the following 466-residue polypeptide: Uronate isomerase (466 aa).

This sequence belongs to the metallo-dependent hydrolases superfamily. Uronate isomerase family.

The catalysed reaction is D-glucuronate = D-fructuronate. It catalyses the reaction aldehydo-D-galacturonate = keto-D-tagaturonate. It functions in the pathway carbohydrate metabolism; pentose and glucuronate interconversion. This Caldanaerobacter subterraneus subsp. tengcongensis (strain DSM 15242 / JCM 11007 / NBRC 100824 / MB4) (Thermoanaerobacter tengcongensis) protein is Uronate isomerase.